The chain runs to 594 residues: Arginine--tRNA ligase (594 aa).

The 'HIGH' region signature appears at Ala-139–His-149.

It belongs to the class-I aminoacyl-tRNA synthetase family. Monomer.

It is found in the cytoplasm. The catalysed reaction is tRNA(Arg) + L-arginine + ATP = L-arginyl-tRNA(Arg) + AMP + diphosphate. The sequence is that of Arginine--tRNA ligase from Burkholderia thailandensis (strain ATCC 700388 / DSM 13276 / CCUG 48851 / CIP 106301 / E264).